The chain runs to 311 residues: Ribosomal protein L11 methyltransferase (311 aa).

S-adenosyl-L-methionine is bound by residues Thr162, Gly183, Asp205, and Asn248.

The protein belongs to the methyltransferase superfamily. PrmA family.

It is found in the cytoplasm. The enzyme catalyses L-lysyl-[protein] + 3 S-adenosyl-L-methionine = N(6),N(6),N(6)-trimethyl-L-lysyl-[protein] + 3 S-adenosyl-L-homocysteine + 3 H(+). Its function is as follows. Methylates ribosomal protein L11. This Bacillus velezensis (strain DSM 23117 / BGSC 10A6 / LMG 26770 / FZB42) (Bacillus amyloliquefaciens subsp. plantarum) protein is Ribosomal protein L11 methyltransferase.